Reading from the N-terminus, the 505-residue chain is DEAD-box ATP-dependent RNA helicase 8 (505 aa).

The disordered stretch occupies residues 1–85 (MNNRGRYPPG…GQIPGGNSNG (85 aa)). Residues 20–31 (PNPNYQSRSGYQ) show a composition bias toward polar residues. Over residues 43–71 (NYAQNHQQQFQQAPSQPHQYQQQQQQQQQ) the composition is skewed to low complexity. The Q motif motif lies at 131–159 (NEFEDYFLKRELLMGIYEKGFERPSPIQE). The region spanning 162–332 (IPIALTGRDI…DRFLTNPYVI (171 aa)) is the Helicase ATP-binding domain. Residue 175-182 (AKNGTGKT) coordinates ATP. Threonine 237 carries the post-translational modification Phosphothreonine. The DEAD box signature appears at 280-283 (DEAD). Positions 342-502 (GITQFYAFVE…QIPPHIDQAI (161 aa)) constitute a Helicase C-terminal domain.

This sequence belongs to the DEAD box helicase family. DDX6/DHH1 subfamily.

It is found in the cytoplasm. Its subcellular location is the P-body. The enzyme catalyses ATP + H2O = ADP + phosphate + H(+). In terms of biological role, ATP-dependent RNA helicase involved in mRNA turnover, and more specifically in mRNA decapping. The polypeptide is DEAD-box ATP-dependent RNA helicase 8 (RH8) (Arabidopsis thaliana (Mouse-ear cress)).